The chain runs to 70 residues: Fumarase D (70 aa).

Belongs to the FumD family.

It carries out the reaction (S)-malate = fumarate + H2O. In vitro catalyzes the addition of water to fumarate, forming malate. Cannot catalyze the reverse reaction. Cannot use the cis-isomer maleate as substrate. This chain is Fumarase D, found in Salmonella typhi.